The following is a 135-amino-acid chain: Ribonuclease P protein component (135 aa).

Belongs to the RnpA family. Consists of a catalytic RNA component (M1 or rnpB) and a protein subunit.

The enzyme catalyses Endonucleolytic cleavage of RNA, removing 5'-extranucleotides from tRNA precursor.. Its function is as follows. RNaseP catalyzes the removal of the 5'-leader sequence from pre-tRNA to produce the mature 5'-terminus. It can also cleave other RNA substrates such as 4.5S RNA. The protein component plays an auxiliary but essential role in vivo by binding to the 5'-leader sequence and broadening the substrate specificity of the ribozyme. The chain is Ribonuclease P protein component from Xylella fastidiosa (strain Temecula1 / ATCC 700964).